The chain runs to 157 residues: SsrA-binding protein (157 aa).

Over residues 136 to 151 (KRETSAKRDWSREKQR) the composition is skewed to basic and acidic residues. Residues 136–157 (KRETSAKRDWSREKQRLLKQNS) form a disordered region.

Belongs to the SmpB family.

The protein resides in the cytoplasm. Its function is as follows. Required for rescue of stalled ribosomes mediated by trans-translation. Binds to transfer-messenger RNA (tmRNA), required for stable association of tmRNA with ribosomes. tmRNA and SmpB together mimic tRNA shape, replacing the anticodon stem-loop with SmpB. tmRNA is encoded by the ssrA gene; the 2 termini fold to resemble tRNA(Ala) and it encodes a 'tag peptide', a short internal open reading frame. During trans-translation Ala-aminoacylated tmRNA acts like a tRNA, entering the A-site of stalled ribosomes, displacing the stalled mRNA. The ribosome then switches to translate the ORF on the tmRNA; the nascent peptide is terminated with the 'tag peptide' encoded by the tmRNA and targeted for degradation. The ribosome is freed to recommence translation, which seems to be the essential function of trans-translation. The sequence is that of SsrA-binding protein from Cereibacter sphaeroides (strain ATCC 17029 / ATH 2.4.9) (Rhodobacter sphaeroides).